A 213-amino-acid chain; its full sequence is Glutathione S-transferase (213 aa).

Residues 4–81 (AKPILYGAWI…YLEDKYPQHP (78 aa)) enclose the GST N-terminal domain. The region spanning 86–211 (DIKTKGLDLQ…LPQNQPDAPS (126 aa)) is the GST C-terminal domain.

It belongs to the GST superfamily. Zeta family.

Its subcellular location is the cytoplasm. It carries out the reaction RX + glutathione = an S-substituted glutathione + a halide anion + H(+). Functionally, has a glutathione transferase activity with ethacrynic acid and nitrophenyl acetate. Has low glutathione peroxidase activity with cumene hydroperoxide. The chain is Glutathione S-transferase (GSTZ1) from Triticum aestivum (Wheat).